The following is a 1107-amino-acid chain: Phospholipid-transporting ATPase 2 (1107 aa).

The Cytoplasmic portion of the chain corresponds to 1-33; the sequence is MKRFVYINDDEASKELCCDNRISNRKYTLWNFL. The chain crosses the membrane as a helical span at residues 34-55; that stretch reads PKNLWEQFSRFMNQYFLLIACL. Residues 56 to 60 lie on the Extracellular side of the membrane; that stretch reads QLWSL. Residues 61-83 traverse the membrane as a helical segment; it reads ITPVNPASTWGPLIFIFAVSASK. The Cytoplasmic segment spans residues 84 to 268; the sequence is EAWDDYHRYL…TAMDAMIDKL (185 aa). A helical transmembrane segment spans residues 269–290; it reads TGAIFVFQIVVVLVLGIAGNVW. Over 291 to 315 the chain is Extracellular; it reads KDTEARKQWYVQYPEEAPWYELLVI. A helical transmembrane segment spans residues 316-333; it reads PLRFELLCSIMIPISIKV. At 334 to 807 the chain is on the cytoplasmic side; sequence SLDLVKGLYA…HGRYSYNRTA (474 aa). D381 (4-aspartylphosphate intermediate) is an active-site residue. Residues D752 and D756 each contribute to the Mg(2+) site. The chain crosses the membrane as a helical span at residues 808–827; that stretch reads FLSQYSFYKSLLICFIQIFF. At 828–841 the chain is on the extracellular side; sequence SFISGVSGTSLFNS. Residues 842-860 form a helical membrane-spanning segment; sequence VSLMAYNVFYTSVPVLVSV. At 861–890 the chain is on the cytoplasmic side; it reads IDKDLSEASVMQHPQILFYCQAGRLLNPST. A helical membrane pass occupies residues 891–912; the sequence is FAGWFGRSLFHAIIVFVITIHA. At 913-919 the chain is on the extracellular side; it reads YAYEKSE. A helical membrane pass occupies residues 920–942; the sequence is MEELGMVALSGCIWLQAFVVAQE. At 943–948 the chain is on the cytoplasmic side; that stretch reads TNSFTV. The chain crosses the membrane as a helical span at residues 949 to 969; it reads LQHLSIWGNLVGFYAINFLFS. The Extracellular portion of the chain corresponds to 970-982; it reads AIPSSGMYTIMFR. The helical transmembrane segment at 983-1007 threads the bilayer; the sequence is LCSQPSYWITMFLIVGAGMGPIFAL. Topologically, residues 1008–1107 are cytoplasmic; it reads KYFRYTYRPS…SGYTRNCKDN (100 aa). The tract at residues 1048-1075 is disordered; it reads DLSPISITQPKNRSPVYEPLLSDSPNAT. The residue at position 1050 (S1050) is a Phosphoserine.

This sequence belongs to the cation transport ATPase (P-type) (TC 3.A.3) family. Type IV subfamily. In terms of assembly, interacts with ALIS1, ALIS3 and ALIS5 in a heterologous system.

The protein localises to the endoplasmic reticulum membrane. The protein resides in the prevacuolar compartment membrane. It carries out the reaction ATP + H2O + phospholipidSide 1 = ADP + phosphate + phospholipidSide 2.. In terms of biological role, involved in transport of phospholipids. Contributes to transmembrane flipping of lipids. Requires an interaction with a protein of the ALIS family for activity. Specific for phosphatidylserine and has no activity with lysolipid, phosphatidylcholine or phosphatidylethanolamine. This Arabidopsis thaliana (Mouse-ear cress) protein is Phospholipid-transporting ATPase 2.